A 214-amino-acid chain; its full sequence is Refilin-B (214 aa).

A disordered region spans residues 1–56 (MVGRLSLQDVPELVDAKKKGDGVLDSPDSGLPPSPSPSHWGLAAGGGGGERAAAPG). 2 positions are modified to phosphoserine: serine 6 and serine 26.

It belongs to the Refilin family. Interacts with FLNA and FLNB.

It localises to the cytoplasm. It is found in the cytoskeleton. Its function is as follows. Involved in the regulation of the perinuclear actin network and nuclear shape through interaction with filamins. Plays an essential role in the formation of cartilaginous skeletal elements. The protein is Refilin-B of Homo sapiens (Human).